A 543-amino-acid polypeptide reads, in one-letter code: Cytochrome P450 52A1 (543 aa).

Residues 1–28 lie on the Lumenal side of the membrane; the sequence is MSSSPSIAQEFLATITPYVEYCQENYTK. Residues 29–48 form a helical membrane-spanning segment; that stretch reads WYYFIPLVILSLNLISMLHT. Topologically, residues 49–543 are cytoplasmic; it reads KYLERKFKAK…GAEVQMYLIL (495 aa). Heme is bound at residue Cys487.

The protein belongs to the cytochrome P450 family. It depends on heme as a cofactor.

The protein localises to the endoplasmic reticulum membrane. In terms of biological role, together with an NADPH cytochrome P450 the enzyme system catalyzes the terminal hydroxylation as the first step in the assimilation of alkanes and fatty acids. In Candida tropicalis (Yeast), this protein is Cytochrome P450 52A1 (CYP52A1).